Here is a 182-residue protein sequence, read N- to C-terminus: MDSSRILKYESRLNFGSLCARRIRAKSEIPAVVYGKESDVLHIKIASNEFNKRFAKFTDNTVLILSDGKVERCVFIKDVSENITKGLIYHVDFYEVDRNRDIERYIAIKFVGASIGVKEGGTLSVLRTKIKVKALPLDLPEFVEVDLTPVKKGHQITFKDIVLPENVKLAEEDENLSILLVK.

It belongs to the bacterial ribosomal protein bL25 family. CTC subfamily. As to quaternary structure, part of the 50S ribosomal subunit; part of the 5S rRNA/L5/L18/L25 subcomplex. Contacts the 5S rRNA. Binds to the 5S rRNA independently of L5 and L18.

Its function is as follows. This is one of the proteins that binds to the 5S RNA in the ribosome where it forms part of the central protuberance. The polypeptide is Large ribosomal subunit protein bL25 (Borrelia turicatae (strain 91E135)).